The following is a 397-amino-acid chain: Elongation factor Tu (397 aa).

The tr-type G domain maps to 10-207 (KPHVNIGTIG…ACDSYIEEPE (198 aa)). The G1 stretch occupies residues 19–26 (GHIDHGKT). 19–26 (GHIDHGKT) is a GTP binding site. Thr-26 serves as a coordination point for Mg(2+). The tract at residues 60 to 64 (GITIA) is G2. Residues 81–84 (DCPG) form a G3 region. GTP is bound by residues 81–85 (DCPGH) and 136–139 (NKCD). The interval 136 to 139 (NKCD) is G4. Positions 174–176 (SAL) are G5.

This sequence belongs to the TRAFAC class translation factor GTPase superfamily. Classic translation factor GTPase family. EF-Tu/EF-1A subfamily. As to quaternary structure, monomer.

The protein localises to the cytoplasm. The enzyme catalyses GTP + H2O = GDP + phosphate + H(+). Its function is as follows. GTP hydrolase that promotes the GTP-dependent binding of aminoacyl-tRNA to the A-site of ribosomes during protein biosynthesis. In Maridesulfovibrio salexigens (strain ATCC 14822 / DSM 2638 / NCIMB 8403 / VKM B-1763) (Desulfovibrio salexigens), this protein is Elongation factor Tu.